We begin with the raw amino-acid sequence, 532 residues long: MGMKKDLLLVLTIESVVLGVVLGFVIRPFNPSNDTISLIGFPGEIFMQIVEMMILPLIMSSVISALAQVRARDARRIGIVTIIYYMITTFLATFTGIILVSSIHPGDPELIHELGEGTLENTALSTLDTFLDQIRNMFPENIIQATFQQVQTEYMPIKPSRVRNATSMNMTSEVLHKQTLTYTNEMNVLGLIVFCSGFGIILSILGDQARLMINFFIVLDAIIMRWISALMWCYPIGILSLVCKNIIDIDNLTETAQALAMYVVTVICGLMIHSLLTLPLLYFLVTKKSPFAFMTGMLQALATAFGTASSGATLPVTFRALEENLKIDRRVTRFVLPLGATITMDGTALYEAVAVIFIAQLHNIKLSLMDLVTISITTTVASIGSGSVPAGLDTIVIVLTTVGLPAKDLSLLLTVDWLLDRIRTSVNVLGDSFGAGIIHHLTRSSLLEADTDELIRQIREDIDILNNPHQDTLPISHHSVQSTIQNTQNAMQAPHVYSKSARASFAPIPNEEERKALLKESIALNKSDTHIV.

Over 1–5 (MGMKK) the chain is Cytoplasmic. 3 helical membrane-spanning segments follow: residues 6-26 (DLLL…GFVI), 46-66 (FMQI…ISAL), and 83-103 (IYYM…VSSI). At 104 to 181 (HPGDPELIHE…SEVLHKQTLT (78 aa)) the chain is on the extracellular side. Residues N164 and N169 are each glycosylated (N-linked (GlcNAc...) asparagine). 5 consecutive transmembrane segments (helical) span residues 182–202 (YTNE…GIIL), 222–242 (IIMR…LSLV), 264–284 (VTVI…LYFL), 352–372 (AVAV…MDLV), and 383–402 (IGSG…LTTV).

This sequence belongs to the dicarboxylate/amino acid:cation symporter (DAACS) (TC 2.A.23) family.

It is found in the membrane. This Caenorhabditis elegans protein is Putative sodium-dependent excitatory amino acid transporter glt-3 (glt-3).